A 170-amino-acid chain; its full sequence is Photosystem I assembly protein Ycf3 (170 aa).

TPR repeat units lie at residues 35 to 68, 72 to 105, and 120 to 153; these read AFTY…EIDP, SYIL…NPFL, and GEQA…TPGN.

Belongs to the Ycf3 family.

The protein localises to the plastid. It is found in the chloroplast thylakoid membrane. Functionally, essential for the assembly of the photosystem I (PSI) complex. May act as a chaperone-like factor to guide the assembly of the PSI subunits. In Oryza sativa (Rice), this protein is Photosystem I assembly protein Ycf3.